Consider the following 85-residue polypeptide: Polcalcin Aln g 4 (85 aa).

EF-hand domains lie at 7-42 (QDQA…LGSV) and 45-77 (DEVK…NRGL). D20, N22, D24, K26, E31, D55, D57, D59, and E66 together coordinate Ca(2+).

This Alnus glutinosa (European alder) protein is Polcalcin Aln g 4.